We begin with the raw amino-acid sequence, 33 residues long: Pardaxin P-1 (33 aa).

Belongs to the pardaxin family. In terms of assembly, in aqueous solution exists as a tetramer.

It localises to the secreted. The protein localises to the target cell membrane. Exhibits unusual shark repellent and surfactant properties. Forms voltage-dependent, ion-permeable channels in membranes. At high concentration causes cell membrane lysis. Causes death in killfish oryzias latipes in 30 minutes at a concentration of 25 micrograms/ml. The polypeptide is Pardaxin P-1 (Pardachirus pavoninus (Peacock sole)).